The sequence spans 102 residues: MTNLYFKTAFLLSLLLLSFSYQSKLIEAKEDKECNDSKCLPNPSRINLEEGNIKRIDVNHGGICDTYLECGGLACSDYRRACCVNGKCVCRKQGQTLPDCPN.

Positions 1–28 are cleaved as a signal peptide; it reads MTNLYFKTAFLLSLLLLSFSYQSKLIEA. 4 disulfides stabilise this stretch: cysteine 39/cysteine 100, cysteine 64/cysteine 83, cysteine 70/cysteine 88, and cysteine 75/cysteine 90.

Belongs to the DEFL family.

Its subcellular location is the secreted. The chain is Defensin-like protein 285 from Arabidopsis thaliana (Mouse-ear cress).